Here is a 318-residue protein sequence, read N- to C-terminus: Replication factor C small subunit (318 aa).

43 to 50 (GPAGTGKT) lines the ATP pocket.

It belongs to the activator 1 small subunits family. RfcS subfamily. As to quaternary structure, heteromultimer composed of small subunits (RfcS) and large subunits (RfcL).

In terms of biological role, part of the RFC clamp loader complex which loads the PCNA sliding clamp onto DNA. This is Replication factor C small subunit from Picrophilus torridus (strain ATCC 700027 / DSM 9790 / JCM 10055 / NBRC 100828 / KAW 2/3).